The sequence spans 545 residues: Phenylalanine--tRNA ligase beta subunit (545 aa).

Residues Phe268–Pro343 enclose the B5 domain. Residues Asp321, Asp327, Glu330, and Asp331 each contribute to the Mg(2+) site.

It belongs to the phenylalanyl-tRNA synthetase beta subunit family. Type 2 subfamily. Tetramer of two alpha and two beta subunits. Requires Mg(2+) as cofactor.

Its subcellular location is the cytoplasm. The enzyme catalyses tRNA(Phe) + L-phenylalanine + ATP = L-phenylalanyl-tRNA(Phe) + AMP + diphosphate + H(+). In Saccharolobus islandicus (strain M.14.25 / Kamchatka #1) (Sulfolobus islandicus), this protein is Phenylalanine--tRNA ligase beta subunit.